Here is a 622-residue protein sequence, read N- to C-terminus: Low affinity potassium transport system protein Kup (622 aa).

12 helical membrane passes run 9–29 (LPAITLAAIGVVYGDIGTSPL), 49–69 (VFGFLSLIFWLLIFVVSIKYL), 103–123 (VIMGLIGGSFFYGEVVITPAI), 137–157 (PQLDTWIVPLSIIVLTLLFMI), 165–185 (VGKLFAPIMLTWFLILAGLGL), 213–233 (VSFIALGAVVLSITGGEVLYA), 247–267 (WFTVVLPSLTLNYFGQGALLL), 276–296 (PFFLLAPDWALIPLLIIAALA), 337–357 (IYIPFVNWMLYVAVVIVIVSF), 363–383 (LAAAYGIAVTGTMVLTSILST), 396–416 (FVALILIAFLCVDIPLFTANL), and 419–439 (LLSGGWLPLSLGTVMFIVMTT).

The protein belongs to the HAK/KUP transporter (TC 2.A.72) family.

The protein resides in the cell inner membrane. The catalysed reaction is K(+)(in) + H(+)(in) = K(+)(out) + H(+)(out). In terms of biological role, responsible for the low-affinity transport of potassium into the cell. Likely operates as a K(+):H(+) symporter. The polypeptide is Low affinity potassium transport system protein Kup (Shigella flexneri).